The chain runs to 208 residues: 3-demethoxyubiquinol 3-hydroxylase (208 aa).

The Fe cation site is built by Glu57, Glu87, His90, Glu139, Glu171, and His174.

It belongs to the COQ7 family. Fe cation serves as cofactor.

The protein localises to the cell membrane. It carries out the reaction a 5-methoxy-2-methyl-3-(all-trans-polyprenyl)benzene-1,4-diol + AH2 + O2 = a 3-demethylubiquinol + A + H2O. It participates in cofactor biosynthesis; ubiquinone biosynthesis. Catalyzes the hydroxylation of 2-nonaprenyl-3-methyl-6-methoxy-1,4-benzoquinol during ubiquinone biosynthesis. This chain is 3-demethoxyubiquinol 3-hydroxylase, found in Nitrosospira multiformis (strain ATCC 25196 / NCIMB 11849 / C 71).